The chain runs to 737 residues: Protein penguin (737 aa).

Positions 1–128 are disordered; that stretch reads MVSSEPKGPA…EKKDLKLKRK (128 aa). Basic and acidic residues-rich tracts occupy residues 76 to 89 and 107 to 122; these read KKFD…DKRL and EGEK…EKKD. Residues 139-490 enclose the PUM-HD domain; the sequence is EANQIHEKLR…EILEQIEAPI (352 aa). Pumilio repeat units lie at residues 167-202, 203-238, 239-274, 388-425, and 426-462; these read NVGD…EISE, KLLP…KLVD, SLYG…YMRQ, NIKE…AIYD, and HLHG…EFIR. The segment at 577 to 638 is disordered; sequence VESSSDDEDE…EEEPAAPLVS (62 aa). The span at 580–600 shows a compositional bias: acidic residues; sequence SSDDEDEDEDEDEESDDEGDE. Residues 601-615 are compositionally biased toward basic and acidic residues; sequence KEQKEAAADDAEPKV. Over residues 616-626 the composition is skewed to basic residues; it reads KKAKKEPKKPK.

The chain is Protein penguin from Drosophila melanogaster (Fruit fly).